Consider the following 273-residue polypeptide: uncharacterized protein (273 aa).

The helical transmembrane segment at 7-27 (LTLGICLVLLIILIVGYVIMT) threads the bilayer.

This sequence belongs to the staphylococcal tandem lipoprotein family.

Its subcellular location is the cell membrane. This is an uncharacterized protein from Staphylococcus aureus (strain MSSA476).